A 227-amino-acid chain; its full sequence is Cytochrome c oxidase subunit 2 (227 aa).

The Mitochondrial intermembrane portion of the chain corresponds to 1-14 (MAHPVQLGLQDATS). Residues 15-45 (PVMEELITFHDHALMAMSLISLLVLYALFST) traverse the membrane as a helical segment. Residues 46 to 59 (LTTKLTNTNITDAQ) are Mitochondrial matrix-facing. The helical transmembrane segment at 60-87 (EMEIIWTILPAIILVLIALPSLRILYLT) threads the bilayer. Over 88-227 (DEVNNPSFTI…IFEMGPVFTL (140 aa)) the chain is Mitochondrial intermembrane. Cu cation-binding residues include histidine 161, cysteine 196, glutamate 198, cysteine 200, histidine 204, and methionine 207. Glutamate 198 is a binding site for Mg(2+).

This sequence belongs to the cytochrome c oxidase subunit 2 family. As to quaternary structure, component of the cytochrome c oxidase (complex IV, CIV), a multisubunit enzyme composed of 14 subunits. The complex is composed of a catalytic core of 3 subunits MT-CO1, MT-CO2 and MT-CO3, encoded in the mitochondrial DNA, and 11 supernumerary subunits COX4I, COX5A, COX5B, COX6A, COX6B, COX6C, COX7A, COX7B, COX7C, COX8 and NDUFA4, which are encoded in the nuclear genome. The complex exists as a monomer or a dimer and forms supercomplexes (SCs) in the inner mitochondrial membrane with NADH-ubiquinone oxidoreductase (complex I, CI) and ubiquinol-cytochrome c oxidoreductase (cytochrome b-c1 complex, complex III, CIII), resulting in different assemblies (supercomplex SCI(1)III(2)IV(1) and megacomplex MCI(2)III(2)IV(2)). Found in a complex with TMEM177, COA6, COX18, COX20, SCO1 and SCO2. Interacts with TMEM177 in a COX20-dependent manner. Interacts with COX20. Interacts with COX16. Cu cation serves as cofactor.

Its subcellular location is the mitochondrion inner membrane. It carries out the reaction 4 Fe(II)-[cytochrome c] + O2 + 8 H(+)(in) = 4 Fe(III)-[cytochrome c] + 2 H2O + 4 H(+)(out). Functionally, component of the cytochrome c oxidase, the last enzyme in the mitochondrial electron transport chain which drives oxidative phosphorylation. The respiratory chain contains 3 multisubunit complexes succinate dehydrogenase (complex II, CII), ubiquinol-cytochrome c oxidoreductase (cytochrome b-c1 complex, complex III, CIII) and cytochrome c oxidase (complex IV, CIV), that cooperate to transfer electrons derived from NADH and succinate to molecular oxygen, creating an electrochemical gradient over the inner membrane that drives transmembrane transport and the ATP synthase. Cytochrome c oxidase is the component of the respiratory chain that catalyzes the reduction of oxygen to water. Electrons originating from reduced cytochrome c in the intermembrane space (IMS) are transferred via the dinuclear copper A center (CU(A)) of subunit 2 and heme A of subunit 1 to the active site in subunit 1, a binuclear center (BNC) formed by heme A3 and copper B (CU(B)). The BNC reduces molecular oxygen to 2 water molecules using 4 electrons from cytochrome c in the IMS and 4 protons from the mitochondrial matrix. This Cercocebus galeritus (Tana river mangabey) protein is Cytochrome c oxidase subunit 2 (MT-CO2).